The chain runs to 366 residues: tRNA N6-adenosine threonylcarbamoyltransferase (366 aa).

Fe cation is bound by residues H119 and H123. Residues 142 to 146, D175, G188, D192, and N281 contribute to the substrate site; that span reads LVSGG. D309 provides a ligand contact to Fe cation.

The protein belongs to the KAE1 / TsaD family. Fe(2+) serves as cofactor.

The protein resides in the cytoplasm. It catalyses the reaction L-threonylcarbamoyladenylate + adenosine(37) in tRNA = N(6)-L-threonylcarbamoyladenosine(37) in tRNA + AMP + H(+). Its function is as follows. Required for the formation of a threonylcarbamoyl group on adenosine at position 37 (t(6)A37) in tRNAs that read codons beginning with adenine. Is involved in the transfer of the threonylcarbamoyl moiety of threonylcarbamoyl-AMP (TC-AMP) to the N6 group of A37, together with TsaE and TsaB. TsaD likely plays a direct catalytic role in this reaction. In Synechococcus sp. (strain JA-3-3Ab) (Cyanobacteria bacterium Yellowstone A-Prime), this protein is tRNA N6-adenosine threonylcarbamoyltransferase.